The chain runs to 527 residues: Nucleobase-ascorbate transporter LPE1 (527 aa).

A run of 12 helical transmembrane segments spans residues 43 to 63 (LVMLGTTVLIATIIVPLMGGG), 68 to 88 (AIVIQTILFLSGINTLLQVHF), 92 to 112 (LPAVMSGSYTYIYPAVAIILS), 132 to 152 (LQGALIIAGVFQAVVGFFGIW), 163 to 183 (AAVPFVTLTGLGLFFFAFPGV), 189 to 209 (VGLPALVLLVIFAEYASHLFA), 219 to 239 (AVLVTVVIIWIYAEILTAAGA), 284 to 304 (FAMLAASFASLIESTGTLIAV), 361 to 383 (VIKISALFMIFFSLFAKFGAVLA), 387 to 409 (LPIFAALYCVLFAYSAGAGFSLL), 427 to 447 (LFLGLSIPQYFRVYEMFFGFG), and 458 to 478 (VMVNVIFSSPATVAAILAYLL).

This sequence belongs to the nucleobase:cation symporter-2 (NCS2) (TC 2.A.40) family. As to expression, highly expressed in roots.

The protein resides in the membrane. Inhibited by excess of xanthin, uric acid and ascorbic acid, and by 100 um N,N-dicyclohexylcarbodiimide and 30 um carbonyl cyanide m-chlorophenyl-hydrazone. Its function is as follows. High affinity uric acid-xanthine transporter in A.nidulans. Binds, but cannot transport ascorbic acid. This is Nucleobase-ascorbate transporter LPE1 (LPE1) from Zea mays (Maize).